The primary structure comprises 218 residues: Guanylate kinase (218 aa).

A Guanylate kinase-like domain is found at 15–194; it reads GMMLVLSSPS…SIADVRAILR (180 aa). ATP is bound at residue 22–29; that stretch reads SPSGAGKT.

It belongs to the guanylate kinase family.

Its subcellular location is the cytoplasm. It catalyses the reaction GMP + ATP = GDP + ADP. Functionally, essential for recycling GMP and indirectly, cGMP. The protein is Guanylate kinase of Rhodospirillum rubrum (strain ATCC 11170 / ATH 1.1.1 / DSM 467 / LMG 4362 / NCIMB 8255 / S1).